A 295-amino-acid polypeptide reads, in one-letter code: NAD kinase (295 aa).

Asp73 serves as the catalytic Proton acceptor. NAD(+) is bound by residues 73–74 (DG), Arg78, 146–147 (NE), Lys157, Arg174, Asp176, and 187–192 (TAYSLS).

The protein belongs to the NAD kinase family. Requires a divalent metal cation as cofactor.

It localises to the cytoplasm. The enzyme catalyses NAD(+) + ATP = ADP + NADP(+) + H(+). Functionally, involved in the regulation of the intracellular balance of NAD and NADP, and is a key enzyme in the biosynthesis of NADP. Catalyzes specifically the phosphorylation on 2'-hydroxyl of the adenosine moiety of NAD to yield NADP. In Wigglesworthia glossinidia brevipalpis, this protein is NAD kinase.